The following is a 272-amino-acid chain: Sulfate transporter CysZ (272 aa).

The next 4 helical transmembrane spans lie at 29–49 (FVIMPIVLNTILLCGLFWLFI), 66–86 (WLSFLSVILLTLSILTILLLF), 148–168 (IIALFLLSFIPLVGQTIVPVL), and 219–239 (FVPVINLLIMPVAVCGATLMW).

It belongs to the CysZ family.

It localises to the cell inner membrane. Its function is as follows. High affinity, high specificity proton-dependent sulfate transporter, which mediates sulfate uptake. Provides the sulfur source for the cysteine synthesis pathway. The chain is Sulfate transporter CysZ from Haemophilus influenzae (strain PittGG).